Here is a 556-residue protein sequence, read N- to C-terminus: Arginine--tRNA ligase (556 aa).

The 'HIGH' region signature appears at 132-142 (ANPTGDLHLGH).

The protein belongs to the class-I aminoacyl-tRNA synthetase family. As to quaternary structure, monomer.

It localises to the cytoplasm. It catalyses the reaction tRNA(Arg) + L-arginine + ATP = L-arginyl-tRNA(Arg) + AMP + diphosphate. The protein is Arginine--tRNA ligase of Listeria welshimeri serovar 6b (strain ATCC 35897 / DSM 20650 / CCUG 15529 / CIP 8149 / NCTC 11857 / SLCC 5334 / V8).